Consider the following 473-residue polypeptide: Maltose fermentation regulatory protein MAL63 (473 aa).

The segment at residues 8–34 is a DNA-binding region (zn(2)-C6 fungal-type); that stretch reads CDCCRVRRVKCDRNKPCNRCIQRNLNC. The Nuclear localization signal signature appears at 41-49; sequence KKRGPKSIR.

It belongs to the MAL13 family.

It localises to the nucleus. Its function is as follows. Regulates the coordinate transcription of structural MAL6S (maltase) and MAL6T (maltose permease) genes. The sequence is that of Maltose fermentation regulatory protein MAL63 (MAL63) from Saccharomyces cerevisiae (Baker's yeast).